Here is a 93-residue protein sequence, read N- to C-terminus: YcgL domain-containing protein Shew_2183 (93 aa).

A YcgL domain is found at 1–85; sequence MICAVYKSRL…PPVNLLEEYK (85 aa).

The protein is YcgL domain-containing protein Shew_2183 of Shewanella loihica (strain ATCC BAA-1088 / PV-4).